We begin with the raw amino-acid sequence, 254 residues long: Acetylglutamate kinase (254 aa).

Substrate-binding positions include 40–41 (GG), Arg62, and Asn154. ATP contacts are provided by residues 177 to 182 (DVSGIL) and 205 to 207 (IIT).

This sequence belongs to the acetylglutamate kinase family. ArgB subfamily. In terms of assembly, homodimer.

The protein resides in the cytoplasm. The catalysed reaction is N-acetyl-L-glutamate + ATP = N-acetyl-L-glutamyl 5-phosphate + ADP. The protein operates within amino-acid biosynthesis; L-arginine biosynthesis; N(2)-acetyl-L-ornithine from L-glutamate: step 2/4. Functionally, catalyzes the ATP-dependent phosphorylation of N-acetyl-L-glutamate. This chain is Acetylglutamate kinase, found in Yersinia enterocolitica serotype O:8 / biotype 1B (strain NCTC 13174 / 8081).